Here is a 422-residue protein sequence, read N- to C-terminus: MLDINYIEQNLDEVIQRLNKRNQQDYSDDLKYVVSKNLKRKEILVKSEALKSRKNQLSKEIGTLLKEKKVDQSEQAKIEVINLNEQIIKLDEELRVVNDQILEKLLYIPNLPHKDIYFGKSDEDNVEIRKSNHSNLLKHSTPHWQIATKLGLVDFEKGVKLSGTRFLIYTGLGSKLVRSIADLLLKRHEKHGYKEIFCPLIVNKSAMLGTGQLPKFSEDMYQVGEQYLIPTSEVPLTNLHANEILAYDVLPLKYTSFTQCFRQEAGSAGRDTKGMIRLHQFNKVELVKIVHPEESMNELEMLIKDAEDVLNMFDLPYRVVELCSGDIGFSSAKTYDLEVWFPEQNKYREISSCSNCTDFQARNMQTRFKDKDSKIKLVHTLNGSGVAVDRLIAAILENYWDGEKLILPTLLRPYFDNQEFIK.

An L-serine-binding site is contributed by 231–233 (TSE). Position 262-264 (262-264 (RQE)) interacts with ATP. Residue Glu-285 participates in L-serine binding. 349 to 352 (EISS) lines the ATP pocket. Ser-384 contributes to the L-serine binding site.

The protein belongs to the class-II aminoacyl-tRNA synthetase family. Type-1 seryl-tRNA synthetase subfamily. Homodimer. The tRNA molecule binds across the dimer.

The protein resides in the cytoplasm. The catalysed reaction is tRNA(Ser) + L-serine + ATP = L-seryl-tRNA(Ser) + AMP + diphosphate + H(+). It carries out the reaction tRNA(Sec) + L-serine + ATP = L-seryl-tRNA(Sec) + AMP + diphosphate + H(+). The protein operates within aminoacyl-tRNA biosynthesis; selenocysteinyl-tRNA(Sec) biosynthesis; L-seryl-tRNA(Sec) from L-serine and tRNA(Sec): step 1/1. Functionally, catalyzes the attachment of serine to tRNA(Ser). Is also able to aminoacylate tRNA(Sec) with serine, to form the misacylated tRNA L-seryl-tRNA(Sec), which will be further converted into selenocysteinyl-tRNA(Sec). This is Serine--tRNA ligase from Mycoplasma capricolum subsp. capricolum (strain California kid / ATCC 27343 / NCTC 10154).